Reading from the N-terminus, the 491-residue chain is MDSAVAGAADIGRYGRRIVRMIWDPEPTNDPIANRPAWCLGYEYTLETNITSKTKGEDSKLSTATSSDQQRPPAQANKVPQMPSAQLPTEAAATALSGNTTPPTPEAALEPTKITSQPAAIDTPPDSVDSSFDSSMAYDDVPDDGGWPPAFLNDFESRIWMTYRSGFEPIPRSTDPTASSRMSFAMRLKTMADQQAGFTTDSGWGCMIRTGQSLLANSLLTCRLGRSWRRGQAPDEERKLLSLFADDPRAPYSIHNFVAHGAAKCGKYPGEWFGPSATARCIHALANATENSFRVYSTGDLPDVYEDSFMEVAKPDGKTFHPTLILISTRLGIDKINQVYWESLTATLQLPQSVGIAGGRPSSSHYFVGAQRSDEDQGSYLFYLDPHHTRPALPFHEDPQLYTPSDVDSCHTRRLRRLHIREMDPSMLIGFLILDEENWHAWKSSVKHVQGKSIITVSEHDPSKGSASGRPSAIDEVETLSDDDGDTVLDG.

The interval 53–137 is disordered; sequence KTKGEDSKLS…VDSSFDSSMA (85 aa). Residues 61–72 are compositionally biased toward polar residues; the sequence is LSTATSSDQQRP. Positions 126 to 135 are enriched in low complexity; sequence DSVDSSFDSS. Cysteine 206 serves as the catalytic Nucleophile. Active-site residues include aspartate 385 and histidine 387. Residues 457–491 are disordered; the sequence is VSEHDPSKGSASGRPSAIDEVETLSDDDGDTVLDG. The segment covering 475–491 has biased composition (acidic residues); that stretch reads DEVETLSDDDGDTVLDG.

Belongs to the peptidase C54 family. As to quaternary structure, interacts with ATG8.

The protein localises to the cytoplasm. It localises to the nucleus. Its subcellular location is the preautophagosomal structure. It catalyses the reaction [protein]-C-terminal L-amino acid-glycyl-phosphatidylethanolamide + H2O = [protein]-C-terminal L-amino acid-glycine + a 1,2-diacyl-sn-glycero-3-phosphoethanolamine. Its function is as follows. Cysteine protease that plays a key role in cytoplasm to vacuole transport (Cvt) and autophagy by mediating both proteolytic activation and delipidation of ATG8. Required for selective autophagic degradation of the nucleus (nucleophagy) as well as for mitophagy which contributes to regulate mitochondrial quantity and quality by eliminating the mitochondria to a basal level to fulfill cellular energy requirements and preventing excess ROS production. The protease activity is required for proteolytic activation of ATG8: cleaves the C-terminal amino acid of ATG8 to reveal a C-terminal glycine. ATG8 ubiquitin-like activity requires the exposure of the glycine at the C-terminus for its conjugation to phosphatidylethanolamine (PE) and its insertion to membranes, which is necessary for autophagy. The ATG8-PE conjugate mediates tethering between adjacent membranes and stimulates membrane hemifusion, leading to expansion of the autophagosomal membrane during autophagy. In addition to the protease activity, also catalyzes deconjugation of PE-conjugated forms of ATG8 during macroautophagy: ATG8 delipidation is required to release the protein from membranes, which facilitates multiple events during macroautophagy, and especially for efficient autophagosome biogenesis, the assembly of ATG9-containing tubulovesicular clusters into phagophores/autophagosomes, and for the disassembly of PAS-associated ATG components. ATG8 delipidation by ATG4 also recycles ATG8-PE generated on inappropriate membranes to maintain a reservoir of unlipidated ATG8 that is required for autophagosome formation at the PAS. The sequence is that of Cysteine protease ATG4 (ATG4) from Pyricularia oryzae (strain 70-15 / ATCC MYA-4617 / FGSC 8958) (Rice blast fungus).